The sequence spans 152 residues: VQ motif-containing protein 8, chloroplastic (152 aa).

The disordered stretch occupies residues 1 to 42 (MIPTRCNEINGSRPSSLKLAGESHTIKKTSSCKSKPRPHGRA). The transit peptide at 1–58 (MIPTRCNEINGSRPSSLKLAGESHTIKKTSSCKSKPRPHGRASPVIIYAHSPKVIHTR) directs the protein to the chloroplast. Positions 62–71 (FMALVQRLTG) match the VQ motif. The disordered stretch occupies residues 80–108 (TSESSSSVVTEEVNVGDDNTAAPFSQDRT). Over residues 81–92 (SESSSSVVTEEV) the composition is skewed to low complexity.

It is found in the plastid. The protein resides in the chloroplast. Its function is as follows. May be involved in chloroplast development. In Arabidopsis thaliana (Mouse-ear cress), this protein is VQ motif-containing protein 8, chloroplastic.